Consider the following 658-residue polypeptide: ATP-dependent RNA helicase DDX3Y (658 aa).

The disordered stretch occupies residues 1–143 (MSQVAAESTA…DWSKPLPPSE (143 aa)). Serine 2 bears the N-acetylserine mark. Residues 45-69 (RNRETSKGVCDKDSSGWSCSKDKDA) show a composition bias toward basic and acidic residues. Lysine 56 is modified (N6-acetyllysine). Phosphoserine is present on residues serine 86 and serine 90. Basic and acidic residues predominate over residues 94 to 129 (GRFDDHGRNDYDGIGGRDRTGFGKFERSGHSRWSDR). Arginine 101 is subject to Omega-N-methylarginine. Residue tyrosine 104 is modified to Phosphotyrosine. Residue arginine 110 is modified to Omega-N-methylarginine. Lysine 117 is subject to N6-acetyllysine. A phosphoserine mark is found at serine 130 and serine 182. A Q motif motif is present at residues 179–207 (ENFSDIEMGEIIMGNIELTRYTRPTPVQK). An ATP-binding site is contributed by 199–206 (YTRPTPVQ). The Helicase ATP-binding domain occupies 210 to 402 (IPIIKEKRDL…RDFLDEYIFL (193 aa)). A Glycyl lysine isopeptide (Lys-Gly) (interchain with G-Cter in SUMO2) cross-link involves residue lysine 214. ATP is bound at residue 223–230 (AQTGSGKT). The DEAD box motif lies at 346–349 (DEAD). The Helicase C-terminal domain occupies 413-574 (NITQKVVWVE…EVPSWLESMA (162 aa)). Serine 455 carries the post-translational modification Phosphoserine. The residue at position 590 (arginine 590) is an Omega-N-methylarginine. A phosphoserine mark is found at serine 592 and serine 603. A disordered region spans residues 597–627 (ARDYRQSSGSANAGFNSNRANSSRSSGSSHN). Over residues 603–627 (SSGSANAGFNSNRANSSRSSGSSHN) the composition is skewed to low complexity. An omega-N-methylarginine mark is found at arginine 615 and arginine 628.

This sequence belongs to the DEAD box helicase family. DDX3/DED1 subfamily. In terms of tissue distribution, found in heart, brain, liver, skeletal muscle, kidney and testis. Low expression detected in lung. In testis, expressed in all types of spermatogenic cells including spermatogonia, spermatocytes, spermatids and somatic Sertoli cells within the seminiferous tubules. Also expressed in Leydig cells and other interstitial cells.

The protein resides in the cytoplasm. It is found in the nucleus. It catalyses the reaction ATP + H2O = ADP + phosphate + H(+). Probable ATP-dependent RNA helicase. During immune response, may enhance IFNB1 expression via IRF3/IRF7 pathway. The chain is ATP-dependent RNA helicase DDX3Y (Ddx3y) from Mus musculus (Mouse).